Consider the following 791-residue polypeptide: Valine--tRNA ligase (791 aa).

Residues 40–50 carry the 'HIGH' region motif; that stretch reads PTVSGKMHMGH. The 'KMSKS' region motif lies at 521–525; the sequence is KMSKS. Lysine 524 contributes to the ATP binding site.

This sequence belongs to the class-I aminoacyl-tRNA synthetase family. ValS type 2 subfamily.

It is found in the cytoplasm. It carries out the reaction tRNA(Val) + L-valine + ATP = L-valyl-tRNA(Val) + AMP + diphosphate. Functionally, catalyzes the attachment of valine to tRNA(Val). As ValRS can inadvertently accommodate and process structurally similar amino acids such as threonine, to avoid such errors, it has a 'posttransfer' editing activity that hydrolyzes mischarged Thr-tRNA(Val) in a tRNA-dependent manner. This chain is Valine--tRNA ligase, found in Thermoplasma acidophilum (strain ATCC 25905 / DSM 1728 / JCM 9062 / NBRC 15155 / AMRC-C165).